The following is a 600-amino-acid chain: Myelin expression factor 2 (600 aa).

The disordered stretch occupies residues 1 to 101 (MADANKAEVP…GEKKGPNRNR (101 aa)). The residue at position 13 (T13) is a Phosphothreonine. A Phosphoserine modification is found at S17. A compositionally biased stretch (basic and acidic residues) spans 27–42 (GEPRREPHPAEAEKQQ). K53 is covalently cross-linked (Glycyl lysine isopeptide (Lys-Gly) (interchain with G-Cter in SUMO2)). Basic and acidic residues-rich tracts occupy residues 54 to 72 (MEND…EKST) and 83 to 96 (YSKD…EKKG). 2 consecutive RRM domains span residues 100-178 (NRVF…EDPD) and 233-310 (STIF…MDDK). Residue R406 is modified to Omega-N-methylarginine. A Phosphoserine modification is found at S431. Residues 523–599 (NQIFVRNLPF…REIDVRLDRN (77 aa)) form the RRM 3 domain.

In terms of assembly, monomer.

The protein resides in the nucleus. Transcriptional repressor of the myelin basic protein gene (MBP). Binds to the proximal MB1 element 5'-TTGTCC-3' of the MBP promoter. Its binding to MB1 and function are inhibited by PURA. The polypeptide is Myelin expression factor 2 (MYEF2) (Homo sapiens (Human)).